A 313-amino-acid polypeptide reads, in one-letter code: Fe-S cluster assembly protein dre2 (313 aa).

2 disordered regions span residues 1 to 25 (MSIT…SQKR) and 151 to 187 (GRKK…AQNN). The tract at residues 20–145 (NGSQKRNLLL…FEKPVQEAAV (126 aa)) is N-terminal SAM-like domain. Positions 146-203 (PLKLGGRKKKDKTNGVNGVQNGVATNGASTNGVGMFDPAQNNDDELIDEDALLSDDDL) are linker. Over residues 159–177 (NGVNGVQNGVATNGASTNG) the composition is skewed to polar residues. The [2Fe-2S] cluster site is built by Cys-213, Cys-225, Cys-228, and Cys-230. The tract at residues 213–230 (CVPETAKKRRRPCKDCTC) is fe-S binding site A. The [4Fe-4S] cluster site is built by Cys-276, Cys-279, Cys-287, and Cys-290. 2 short sequence motifs (cx2C motif) span residues 276–279 (CNSC) and 287–290 (CSSC). Residues 276-290 (CNSCSLGDAFRCSSC) form a fe-S binding site B region.

Belongs to the anamorsin family. Monomer. Interacts with tah18. Interacts with mia40. [2Fe-2S] cluster serves as cofactor. [4Fe-4S] cluster is required as a cofactor.

The protein resides in the cytoplasm. It is found in the mitochondrion intermembrane space. Its function is as follows. Component of the cytosolic iron-sulfur (Fe-S) protein assembly (CIA) machinery required for the maturation of extramitochondrial Fe-S proteins. Part of an electron transfer chain functioning in an early step of cytosolic Fe-S biogenesis, facilitating the de novo assembly of a [4Fe-4S] cluster on the scaffold complex cfd1-nbp35. Electrons are transferred to dre2 from NADPH via the FAD- and FMN-containing protein tah18. Tah18-dre2 are also required for the assembly of the diferric tyrosyl radical cofactor of ribonucleotide reductase (RNR), probably by providing electrons for reduction during radical cofactor maturation in the catalytic small subunit rnr2. The chain is Fe-S cluster assembly protein dre2 from Aspergillus flavus (strain ATCC 200026 / FGSC A1120 / IAM 13836 / NRRL 3357 / JCM 12722 / SRRC 167).